Consider the following 356-residue polypeptide: sn-glycerol-3-phosphate import ATP-binding protein UgpC (356 aa).

Residues 4 to 235 (LKLQAVTKSW…PASRFVASFI (232 aa)) form the ABC transporter domain. Position 37 to 44 (37 to 44 (GPSGCGKS)) interacts with ATP.

The protein belongs to the ABC transporter superfamily. sn-glycerol-3-phosphate importer (TC 3.A.1.1.3) family. As to quaternary structure, the complex is composed of two ATP-binding proteins (UgpC), two transmembrane proteins (UgpA and UgpE) and a solute-binding protein (UgpB).

Its subcellular location is the cell inner membrane. The catalysed reaction is sn-glycerol 3-phosphate(out) + ATP + H2O = sn-glycerol 3-phosphate(in) + ADP + phosphate + H(+). Part of the ABC transporter complex UgpBAEC involved in sn-glycerol-3-phosphate (G3P) import. Responsible for energy coupling to the transport system. This Salmonella typhimurium (strain LT2 / SGSC1412 / ATCC 700720) protein is sn-glycerol-3-phosphate import ATP-binding protein UgpC.